A 695-amino-acid chain; its full sequence is Lysophospholipase 2 (695 aa).

The N-terminal stretch at 1–19 (MQLSVLIASVLAAGAAVDA) is a signal peptide. Residues asparagine 26, asparagine 72, asparagine 83, asparagine 115, asparagine 152, asparagine 171, asparagine 207, asparagine 269, asparagine 335, asparagine 379, asparagine 480, asparagine 504, asparagine 513, asparagine 532, asparagine 556, asparagine 573, asparagine 620, asparagine 626, asparagine 644, and asparagine 648 are each glycosylated (N-linked (GlcNAc...) asparagine). One can recognise a PLA2c domain in the interval 28-577 (SCPDNANFIR…TNYCWNGTID (550 aa)). A disordered region spans residues 612–662 (NTGSGTKSNSSSKTNSTLVTSSRATSTGTLISNSSSNSTVSSTAARSSTSS).

The protein belongs to the lysophospholipase family.

The protein resides in the secreted. Its subcellular location is the cell wall. It catalyses the reaction a 1-acyl-sn-glycero-3-phosphocholine + H2O = sn-glycerol 3-phosphocholine + a fatty acid + H(+). Catalyzes the release of fatty acids from lysophospholipids. Phospholipase B may well contribute to pathogenicity by abetting the fungus in damaging and traversing host cell membranes, processes which likely increase the rapidity of disseminated infection. This is Lysophospholipase 2 from Candida glabrata (strain ATCC 2001 / BCRC 20586 / JCM 3761 / NBRC 0622 / NRRL Y-65 / CBS 138) (Yeast).